The sequence spans 727 residues: Catalase-peroxidase (727 aa).

The segment at 1-24 (MDQKSDSAGKCPVAHTAPRGRSNR) is disordered. The tryptophyl-tyrosyl-methioninium (Trp-Tyr) (with M-243) cross-link spans 95–217 (WHSAGTYRIT…LAAVQMGLIY (123 aa)). Catalysis depends on His96, which acts as the Proton acceptor. Positions 217-243 (YVNPEGPNGNPDPVAAARDIRETFARM) form a cross-link, tryptophyl-tyrosyl-methioninium (Tyr-Met) (with W-95). Residue His258 coordinates heme b.

This sequence belongs to the peroxidase family. Peroxidase/catalase subfamily. Homodimer or homotetramer. Heme b is required as a cofactor. Formation of the three residue Trp-Tyr-Met cross-link is important for the catalase, but not the peroxidase activity of the enzyme.

The enzyme catalyses H2O2 + AH2 = A + 2 H2O. It catalyses the reaction 2 H2O2 = O2 + 2 H2O. Bifunctional enzyme with both catalase and broad-spectrum peroxidase activity. In Rhizobium meliloti (strain 1021) (Ensifer meliloti), this protein is Catalase-peroxidase.